We begin with the raw amino-acid sequence, 477 residues long: Glycogen synthase (477 aa).

Lys15 lines the ADP-alpha-D-glucose pocket.

The protein belongs to the glycosyltransferase 1 family. Bacterial/plant glycogen synthase subfamily.

It catalyses the reaction [(1-&gt;4)-alpha-D-glucosyl](n) + ADP-alpha-D-glucose = [(1-&gt;4)-alpha-D-glucosyl](n+1) + ADP + H(+). It functions in the pathway glycan biosynthesis; glycogen biosynthesis. Its function is as follows. Synthesizes alpha-1,4-glucan chains using ADP-glucose. The chain is Glycogen synthase from Clostridium acetobutylicum (strain ATCC 824 / DSM 792 / JCM 1419 / IAM 19013 / LMG 5710 / NBRC 13948 / NRRL B-527 / VKM B-1787 / 2291 / W).